We begin with the raw amino-acid sequence, 574 residues long: Developmental and secondary metabolism regulator veA (574 aa).

Disordered regions lie at residues 1 to 22, 39 to 60, 255 to 500, and 513 to 548; these read MATRAPLAPPPNETEASVSRIT, ERARACGAGAKSSADRRPVDPP, RSSD…GAGK, and RSYEDSFGHDDRPLYNGMRPDTESHPRRLSDAGRNF. The Velvet domain maps to 25–230; that stretch reads GKKLTYKLNV…AEQGCRVRIR (206 aa). A Nuclear localization signal motif is present at residues 39-44; it reads ERARAC. 2 stretches are compositionally biased toward pro residues: residues 314 to 323 and 330 to 341; these read RPMPPAPVPA and PAPPAPPAPPSH. Polar residues-rich tracts occupy residues 343–359, 385–394, 402–415, and 448–458; these read PGYQSHLSFGSTQTQYP, HARNPSTSAE, YPSSRVSTERSSYP, and VAQSAGPRSQT. A PEST region spans residues 457 to 501; it reads QTPSSSLVPSLPPLKALSGDYPNNLSQPSSSISQSPSHDLGAGKK. Low complexity-rich tracts occupy residues 459–474 and 482–493; these read PSSSLVPSLPPLKALS and SQPSSSISQSPS. Composition is skewed to basic and acidic residues over residues 513 to 525 and 532 to 543; these read RSYEDSFGHDDRP and PDTESHPRRLSD.

This sequence belongs to the velvet family. VeA subfamily. Component of the heterotrimeric velvet complex composed of laeA, veA and velB; VeA acting as a bridging protein between laeA and velB.

The protein resides in the nucleus. Its subcellular location is the cytoplasm. Component of the velvet transcription factor complex that controls sexual/asexual developmental ratio in response to light, promoting sexual development in the darkness while stimulating asexual sporulation under illumination. The velvet complex hat acts as a global regulator for secondary metabolite gene expression. Controls the expression of the aflatoxin gene cluster. Required for the expression of aflR and aflJ. Mediates the coordination of aflatoxigenic vesicles (aflatoxisomes) development with aflatoxin gene expression. Regulates branched chain amino acid and ethanol metabolism and acts as a positive regulator of mitochondrial and peroxisomal beta-oxidation. The protein is Developmental and secondary metabolism regulator veA of Aspergillus parasiticus.